We begin with the raw amino-acid sequence, 325 residues long: GMP reductase (325 aa).

The Thioimidate intermediate role is filled by cysteine 174. An NADP(+)-binding site is contributed by 203–226; that stretch reads IIADGGLRTHGDIAKSIRFGATMV.

This sequence belongs to the IMPDH/GMPR family. GuaC type 2 subfamily.

It carries out the reaction IMP + NH4(+) + NADP(+) = GMP + NADPH + 2 H(+). In terms of biological role, catalyzes the irreversible NADPH-dependent deamination of GMP to IMP. It functions in the conversion of nucleobase, nucleoside and nucleotide derivatives of G to A nucleotides, and in maintaining the intracellular balance of A and G nucleotides. The polypeptide is GMP reductase (Staphylococcus epidermidis (strain ATCC 35984 / DSM 28319 / BCRC 17069 / CCUG 31568 / BM 3577 / RP62A)).